The primary structure comprises 217 residues: FGFR1 oncogene partner 2 homolog (217 aa).

Coiled-coil stretches lie at residues 6–106 (TIEK…MSKY) and 163–188 (KEQE…TRES). Residues 194–217 (KEDASESTSLSGLVTSSDLSLRKS) are disordered. Positions 199–217 (ESTSLSGLVTSSDLSLRKS) are enriched in polar residues.

Belongs to the SIKE family.

The protein resides in the cytoplasm. In Gallus gallus (Chicken), this protein is FGFR1 oncogene partner 2 homolog (FGFR1OP2).